The primary structure comprises 438 residues: Putative metabolite transport protein HI_0281 (438 aa).

The Cytoplasmic portion of the chain corresponds to 1-17 (MSTQLRNNPMKVALASM). Residues 18 to 38 (VGTAIEFFDYYIYAAAAVLVF) form a helical membrane-spanning segment. Residues 39–52 (NTQFFHSDDPLSND) lie on the Periplasmic side of the membrane. Residues 53–73 (LLSLSTLALAFFARPIGSALF) traverse the membrane as a helical segment. Residues 74-85 (GHFGDKIGRKKT) lie on the Cytoplasmic side of the membrane. The helical transmembrane segment at 86-106 (LVASLVLMGGSTVVIGLLPNY) threads the bilayer. The Periplasmic portion of the chain corresponds to 107-115 (AQIGIWAPI). A helical membrane pass occupies residues 116 to 136 (LLCVCRVGQGIGLGGEWGGAA). Topologically, residues 137 to 156 (LVATENAPEGKRAWYGTFPQ) are cytoplasmic. The chain crosses the membrane as a helical span at residues 157 to 177 (LGAPIGLFVANGTFFLVSYLL). Residues 178–181 (GHNA) lie on the Periplasmic side of the membrane. A helical transmembrane segment spans residues 182–202 (LVEWAWRIPFVSSILLVAVGL). The Cytoplasmic portion of the chain corresponds to 203 to 239 (YVRLTLHESHVFVEAEQKGKKLNAPVSVVFTKHLKPM). Residues 240-260 (VIGTFIMVATYSLFYIMTAFA) traverse the membrane as a helical segment. At 261 to 286 (QAYSRTAPKLSEAGYALGLGIPANTF) the chain is on the periplasmic side. The chain crosses the membrane as a helical span at residues 287-307 (TGLLLISAIVFGIFISISGFY). Over 308–314 (ADKIGRR) the chain is Cytoplasmic. A helical membrane pass occupies residues 315-336 (KWLIWVTIAIGVLGLAMPLFLE). Topologically, residues 337-342 (NGTPVS) are periplasmic. The helical transmembrane segment at 343 to 363 (VFAFLVIGMAIMGMTFGPMAA) threads the bilayer. The Cytoplasmic segment spans residues 364 to 377 (LLPELFPTEVRYSG). The helical transmembrane segment at 378 to 398 (ASLAYNLASIIGATIAAMISL) threads the bilayer. Over 399 to 405 (KINASFG) the chain is Periplasmic. The chain crosses the membrane as a helical span at residues 406–426 (VMGVGIYLAINALMTFLALLA). At 427–438 (SKETKNVDLTEI) the chain is on the cytoplasmic side.

This sequence belongs to the major facilitator superfamily. Sugar transporter (TC 2.A.1.1) family.

The protein resides in the cell inner membrane. The chain is Putative metabolite transport protein HI_0281 from Haemophilus influenzae (strain ATCC 51907 / DSM 11121 / KW20 / Rd).